We begin with the raw amino-acid sequence, 330 residues long: MAESAPLKIVFMGTPDFAAASLRHLLAWDGCDVVGVYTQPDRPCGRGQQCRPSAVKMLALEHGLDVRQPVNFRDEADVQALRDFGADILVVAAYGLILPQSVLDAAPMGAVNVHGSLLPRYRGAAPIQRAVMNGDAVTGITIMQVVKQLDAGPMLLQKALGIGCDETSGQLHDQLAELGGRLLVETLARLRAGTIMPIPQDDALATYAAKLTKADGLVDWNRTAVEVHAQVRGVTPWPAAYFTLRREGQKDVRVTIEPGTIGPLLEQPAVPGTIVGLVDGAIAFACADRTYLVRTIRPADKKPMTGEAFWCGYLSRCEGECPGFAVCEGA.

116 to 119 contacts (6S)-5,6,7,8-tetrahydrofolate; it reads SLLP.

It belongs to the Fmt family.

The enzyme catalyses L-methionyl-tRNA(fMet) + (6R)-10-formyltetrahydrofolate = N-formyl-L-methionyl-tRNA(fMet) + (6S)-5,6,7,8-tetrahydrofolate + H(+). In terms of biological role, attaches a formyl group to the free amino group of methionyl-tRNA(fMet). The formyl group appears to play a dual role in the initiator identity of N-formylmethionyl-tRNA by promoting its recognition by IF2 and preventing the misappropriation of this tRNA by the elongation apparatus. This is Methionyl-tRNA formyltransferase from Nitratidesulfovibrio vulgaris (strain DP4) (Desulfovibrio vulgaris).